The primary structure comprises 307 residues: D-alanine--D-alanine ligase (307 aa).

The ATP-grasp domain occupies 110 to 299; sequence KQLWKGAGLP…FDVLVGEILL (190 aa). Position 136–185 (136–185) interacts with ATP; that stretch reads PVIVKPAHEGSSIGMAKADNTEELGEALVAAEKFDQDVLVEAWVNGPEYT. Mg(2+)-binding residues include Asp-253, Glu-266, and Asn-268.

Belongs to the D-alanine--D-alanine ligase family. Requires Mg(2+) as cofactor. The cofactor is Mn(2+).

The protein localises to the cytoplasm. It carries out the reaction 2 D-alanine + ATP = D-alanyl-D-alanine + ADP + phosphate + H(+). The protein operates within cell wall biogenesis; peptidoglycan biosynthesis. Cell wall formation. This chain is D-alanine--D-alanine ligase, found in Alcanivorax borkumensis (strain ATCC 700651 / DSM 11573 / NCIMB 13689 / SK2).